Here is a 156-residue protein sequence, read N- to C-terminus: Snaclec 2 (156 aa).

A signal peptide spans 1–21; sequence MGRFIFLSSGLLVVFLSLSGA. Intrachain disulfides connect cysteine 25-cysteine 36, cysteine 53-cysteine 150, and cysteine 125-cysteine 142. Residues 32–151 form the C-type lectin domain; that stretch reads FDQHCYRAFD…CGDDYPFVCK (120 aa).

Belongs to the snaclec family. As to quaternary structure, heterodimer; disulfide-linked. Expressed by the venom gland.

Its subcellular location is the secreted. Its function is as follows. Interferes with one step of hemostasis (modulation of platelet aggregation, or coagulation cascade, for example). This Bitis gabonica (Gaboon adder) protein is Snaclec 2.